Here is a 180-residue protein sequence, read N- to C-terminus: UPF0102 protein Tery_0733 (180 aa).

The protein belongs to the UPF0102 family.

The chain is UPF0102 protein Tery_0733 from Trichodesmium erythraeum (strain IMS101).